Here is a 484-residue protein sequence, read N- to C-terminus: Sodium-dependent glucose transporter 1 (484 aa).

Serine 6 is modified (phosphoserine). Transmembrane regions (helical) follow at residues tryptophan 40–leucine 60, glutamate 80–phenylalanine 100, phenylalanine 106–cysteine 126, methionine 135–leucine 155, alanine 168–tryptophan 188, leucine 227–alanine 247, alanine 274–glycine 294, serine 317–leucine 337, glycine 340–phenylalanine 360, cysteine 366–isoleucine 386, alanine 401–leucine 421, and leucine 428–valine 448.

This sequence belongs to the major facilitator superfamily. As to expression, expressed in brain, liver, lung, and kidney. In kidney expressed in cortex and inner medulla, in ascending thin limbs (ATLs) and lower descending thin limbs (DTLs). Primarily expressed in the proximal tubules of the kidney.

It is found in the apical cell membrane. May function as a sodium-dependent glucose transporter. Potential channels for urea in the inner medulla of kidney. The polypeptide is Sodium-dependent glucose transporter 1 (Rattus norvegicus (Rat)).